Consider the following 437-residue polypeptide: Putative permease IIC component (437 aa).

The 436-residue stretch at 2-437 (FDYILSLGGT…LFLRKRELSE (436 aa)) folds into the PTS EIIC type-2 domain. A run of 12 helical transmembrane segments spans residues 5 to 25 (ILSL…GLIF), 35 to 55 (AGVT…MAID), 88 to 108 (ATAI…AMLV), 134 to 154 (LMTG…ALSL), 173 to 193 (ISIP…LDAI), 215 to 235 (GMVG…GLAA), 236 to 256 (GEGF…MVLF), 302 to 322 (TIAV…ILPG), 325 to 345 (VLPL…TVIH), 354 to 374 (ISGV…APYF), 385 to 405 (FAGE…GWSI), and 410 to 430 (SLGI…VLFL).

It is found in the cell inner membrane. Its function is as follows. The phosphoenolpyruvate-dependent sugar phosphotransferase system (PTS), a major carbohydrate active -transport system, catalyzes the phosphorylation of incoming sugar substrates concomitant with their translocation across the cell membrane. This is Putative permease IIC component (sgcC) from Escherichia coli (strain K12).